A 528-amino-acid chain; its full sequence is Lanosterol 14-alpha demethylase (528 aa).

A heme-binding site is contributed by Cys-470.

This sequence belongs to the cytochrome P450 family. The cofactor is heme.

Its subcellular location is the membrane. The catalysed reaction is a 14alpha-methyl steroid + 3 reduced [NADPH--hemoprotein reductase] + 3 O2 = a Delta(14) steroid + formate + 3 oxidized [NADPH--hemoprotein reductase] + 4 H2O + 4 H(+). It catalyses the reaction a 14alpha-methyl steroid + reduced [NADPH--hemoprotein reductase] + O2 = a 14alpha-hydroxymethyl steroid + oxidized [NADPH--hemoprotein reductase] + H2O + H(+). The enzyme catalyses a 14alpha-hydroxymethyl steroid + reduced [NADPH--hemoprotein reductase] + O2 = a 14alpha-formyl steroid + oxidized [NADPH--hemoprotein reductase] + 2 H2O + H(+). It carries out the reaction a 14alpha-formyl steroid + reduced [NADPH--hemoprotein reductase] + O2 = a Delta(14) steroid + formate + oxidized [NADPH--hemoprotein reductase] + H2O + 2 H(+). The catalysed reaction is lanosterol + 3 reduced [NADPH--hemoprotein reductase] + 3 O2 = 4,4-dimethyl-5alpha-cholesta-8,14,24-trien-3beta-ol + formate + 3 oxidized [NADPH--hemoprotein reductase] + 4 H2O + 4 H(+). It catalyses the reaction lanosterol + reduced [NADPH--hemoprotein reductase] + O2 = 32-hydroxylanosterol + oxidized [NADPH--hemoprotein reductase] + H2O + H(+). The enzyme catalyses 32-hydroxylanosterol + reduced [NADPH--hemoprotein reductase] + O2 = 32-oxolanosterol + oxidized [NADPH--hemoprotein reductase] + 2 H2O + H(+). It carries out the reaction 32-oxolanosterol + reduced [NADPH--hemoprotein reductase] + O2 = 4,4-dimethyl-5alpha-cholesta-8,14,24-trien-3beta-ol + formate + oxidized [NADPH--hemoprotein reductase] + H2O + 2 H(+). The catalysed reaction is eburicol + 3 reduced [NADPH--hemoprotein reductase] + 3 O2 = 14-demethyleburicol + formate + 3 oxidized [NADPH--hemoprotein reductase] + 4 H2O + 4 H(+). It catalyses the reaction eburicol + reduced [NADPH--hemoprotein reductase] + O2 = 32-hydroxyeburicol + oxidized [NADPH--hemoprotein reductase] + H2O + H(+). The enzyme catalyses 32-hydroxyeburicol + reduced [NADPH--hemoprotein reductase] + O2 = 32-oxoeburicol + oxidized [NADPH--hemoprotein reductase] + 2 H2O + H(+). It carries out the reaction 32-oxoeburicol + reduced [NADPH--hemoprotein reductase] + O2 = 14-demethyleburicol + formate + oxidized [NADPH--hemoprotein reductase] + H2O + 2 H(+). It participates in steroid biosynthesis; zymosterol biosynthesis; zymosterol from lanosterol: step 1/6. Its function is as follows. Sterol 14alpha-demethylase that plays a critical role in the third module of ergosterol biosynthesis pathway, being ergosterol the major sterol component in fungal membranes that participates in a variety of functions. The third module or late pathway involves the ergosterol synthesis itself through consecutive reactions that mainly occur in the endoplasmic reticulum (ER) membrane. In filamentous fungi, during the initial step of this module, lanosterol (lanosta-8,24-dien-3beta-ol) can be metabolized to eburicol. Sterol 14alpha-demethylase catalyzes the three-step oxidative removal of the 14alpha-methyl group (C-32) of both these sterols in the form of formate, and converts eburicol and lanosterol to 14-demethyleburicol (4,4,24-trimethylergosta-8,14,24(28)-trienol) and 4,4-dimethyl-5alpha-cholesta-8,14,24-trien-3beta-ol, respectively, which are further metabolized by other enzymes in the pathway to ergosterol. Can also use substrates not intrinsic to fungi, such as 24,25-dihydrolanosterol (DHL), producing 4,4-dimethyl-8,14-cholestadien-3-beta-ol, but at lower rates than the endogenous substrates. In Candida tropicalis (Yeast), this protein is Lanosterol 14-alpha demethylase (ERG11).